A 341-amino-acid polypeptide reads, in one-letter code: L-threonine 3-dehydrogenase (341 aa).

Residue cysteine 38 participates in Zn(2+) binding. Catalysis depends on charge relay system residues threonine 40 and histidine 43. Zn(2+) is bound by residues histidine 63, glutamate 64, cysteine 93, cysteine 96, cysteine 99, and cysteine 107. NAD(+)-binding positions include isoleucine 175, aspartate 195, arginine 200, 262–264 (LGI), and 286–287 (IY).

This sequence belongs to the zinc-containing alcohol dehydrogenase family. Homotetramer. Zn(2+) is required as a cofactor.

It is found in the cytoplasm. The catalysed reaction is L-threonine + NAD(+) = (2S)-2-amino-3-oxobutanoate + NADH + H(+). It participates in amino-acid degradation; L-threonine degradation via oxydo-reductase pathway; glycine from L-threonine: step 1/2. Functionally, catalyzes the NAD(+)-dependent oxidation of L-threonine to 2-amino-3-ketobutyrate. The chain is L-threonine 3-dehydrogenase from Escherichia coli O139:H28 (strain E24377A / ETEC).